Here is a 185-residue protein sequence, read N- to C-terminus: Dual specificity protein phosphatase 3 (185 aa).

In terms of domain architecture, Tyrosine-protein phosphatase spans 28-179 (QPCNEVVPRV…LCQLNDRLAK (152 aa)). Cys124 functions as the Phosphocysteine intermediate in the catalytic mechanism.

It belongs to the protein-tyrosine phosphatase family. Non-receptor class dual specificity subfamily. Microtubule inner protein component of sperm flagellar doublet microtubules. Interacts with VRK3; this interaction activates DUSP3 phosphatase activity.

It localises to the nucleus. Its subcellular location is the cytoplasm. It is found in the cytoskeleton. The protein resides in the flagellum axoneme. The catalysed reaction is O-phospho-L-tyrosyl-[protein] + H2O = L-tyrosyl-[protein] + phosphate. The enzyme catalyses O-phospho-L-seryl-[protein] + H2O = L-seryl-[protein] + phosphate. It carries out the reaction O-phospho-L-threonyl-[protein] + H2O = L-threonyl-[protein] + phosphate. Its function is as follows. Shows activity both for tyrosine-protein phosphate and serine-protein phosphate, but displays a strong preference toward phosphotyrosines. Specifically dephosphorylates and inactivates ERK1 and ERK2. The sequence is that of Dual specificity protein phosphatase 3 (Dusp3) from Mus musculus (Mouse).